The following is a 780-amino-acid chain: APC membrane recruitment protein 3 (780 aa).

The segment covering 20-32 (KLIDSPAKEDPDK) has biased composition (basic and acidic residues). Disordered regions lie at residues 20–59 (KLIDSPAKEDPDKWPLSLGEQQRAYGEKSSQTSPCSQGYG), 341–407 (ELPL…FPRD), 547–569 (KGREDQATTCFPPSRQEPWAHSG), 582–617 (GEPARGSKTPSKDDSLEEGTQDFSEGQSSSEATMTS), 635–659 (KELGTPGNLRYSQGPLRPGHRGSAL), 706–729 (KNPISSKPNEAAGCGLSSSASPQD), and 749–780 (LGPQACSSVDSQPQQLCPRAPEQVPHRGSVGS). Residues 354 to 376 (SKASSIDTGTPKSEQPESVSTSD) are compositionally biased toward polar residues. A compositionally biased stretch (polar residues) spans 602-617 (QDFSEGQSSSEATMTS). Over residues 753–763 (ACSSVDSQPQQ) the composition is skewed to polar residues.

It belongs to the Amer family.

It localises to the cell membrane. In terms of biological role, regulator of the canonical Wnt signaling pathway. Acts by specifically binding phosphatidylinositol 4,5-bisphosphate (PtdIns(4,5)P2), translocating to the cell membrane. The sequence is that of APC membrane recruitment protein 3 (Amer3) from Mus musculus (Mouse).